Consider the following 127-residue polypeptide: Translation initiation factor 5A (127 aa).

Lys35 carries the hypusine modification.

It belongs to the eIF-5A family.

It localises to the cytoplasm. Its function is as follows. Functions by promoting the formation of the first peptide bond. This chain is Translation initiation factor 5A (eIF5A), found in Methanothrix thermoacetophila (strain DSM 6194 / JCM 14653 / NBRC 101360 / PT) (Methanosaeta thermophila).